Reading from the N-terminus, the 405-residue chain is Corticosteroid-binding globulin (405 aa).

The first 22 residues, 1–22, serve as a signal peptide directing secretion; the sequence is MPLLLYTCLLWLSTSGLWTVQA. Residues Asn-26, Asn-31, Asn-96, and Asn-260 are each glycosylated (N-linked (GlcNAc...) asparagine). A cortisol-binding site is contributed by Asn-286. N-linked (GlcNAc...) asparagine glycosylation is found at Asn-330 and Asn-369. A cortisol-binding site is contributed by Trp-393.

This sequence belongs to the serpin family. As to expression, expressed by the liver; secreted in plasma.

The protein resides in the secreted. Functionally, major transport protein for glucocorticoids and progestins in the blood of almost all vertebrate species. This chain is Corticosteroid-binding globulin (SERPINA6), found in Pongo abelii (Sumatran orangutan).